The sequence spans 259 residues: Adenylosuccinate synthetase (259 aa).

GTP contacts are provided by residues 3 to 9 (GDEGKGK) and 31 to 33 (GHT). Asp-4 serves as the catalytic Proton acceptor. Asp-4 and Gly-31 together coordinate Mg(2+). Position 4–7 (4–7 (DEGK)) interacts with IMP. The active-site Proton donor is His-32. IMP is bound by residues Thr-120, Arg-134, Gln-215, and Thr-230.

This sequence belongs to the adenylosuccinate synthetase family. Homodimer. The cofactor is Mg(2+).

Its subcellular location is the cytoplasm. It catalyses the reaction IMP + L-aspartate + GTP = N(6)-(1,2-dicarboxyethyl)-AMP + GDP + phosphate + 2 H(+). The protein operates within purine metabolism; AMP biosynthesis via de novo pathway; AMP from IMP: step 1/2. Its function is as follows. Plays an important role in the de novo pathway of purine nucleotide biosynthesis. Catalyzes the first committed step in the biosynthesis of AMP from IMP. The sequence is that of Adenylosuccinate synthetase from Aggregatibacter actinomycetemcomitans (Actinobacillus actinomycetemcomitans).